A 149-amino-acid polypeptide reads, in one-letter code: Arginine repressor (149 aa).

The protein belongs to the ArgR family.

The protein resides in the cytoplasm. It participates in amino-acid biosynthesis; L-arginine biosynthesis [regulation]. Regulates arginine biosynthesis genes. The polypeptide is Arginine repressor (Alkaliphilus metalliredigens (strain QYMF)).